We begin with the raw amino-acid sequence, 386 residues long: Caspase-1-A (386 aa).

The propeptide occupies 1–100 (MTAQLNKVRR…PPMAPVPIQE (100 aa)). The region spanning 22 to 88 (SDLLDDLREK…HKTLAKSLGL (67 aa)) is the CARD domain. Residues His218 and Cys274 contribute to the active site. Residues 287-296 (DVASPPLEDD) constitute a propeptide that is removed on maturation.

It belongs to the peptidase C14A family. As to quaternary structure, heterotetramer that consists of two anti-parallel arranged heterodimers, each one formed by a 20 kDa (Caspase-1 subunit p20) and a 10 kDa (Caspase-1 subunit p10) subunit. In terms of assembly, heterotetramer that consists of two anti-parallel arranged heterodimers, each one formed by a 20 kDa (Caspase-1 subunit p20) and a 10 kDa (Caspase-1 subunit p10) subunit. Can form a heterodimer with isoform epsilon which then has an inhibitory effect. The two subunits are derived from the precursor sequence by an autocatalytic mechanism.

The protein localises to the cytoplasm. The protein resides in the cell membrane. The catalysed reaction is Strict requirement for an Asp residue at position P1 and has a preferred cleavage sequence of Tyr-Val-Ala-Asp-|-.. Thiol protease involved in a variety of inflammatory processes by proteolytically cleaving other proteins, such as the precursors of the inflammatory cytokines interleukin-1 beta (IL1B) and interleukin 18 (IL18) as well as the pyroptosis inducer Gasdermin-D (GSDMD), into active mature peptides. Plays a key role in cell immunity as an inflammatory response initiator: once activated through formation of an inflammasome complex, it initiates a pro-inflammatory response through the cleavage of the two inflammatory cytokines IL1B and IL18, releasing the mature cytokines which are involved in a variety of inflammatory processes. Cleaves a tetrapeptide after an Asp residue at position P1. Also initiates pyroptosis, a programmed lytic cell death pathway, through cleavage of GSDMD. This chain is Caspase-1-A (casp1-a), found in Xenopus laevis (African clawed frog).